The following is a 180-amino-acid chain: Pyruvoyl-dependent arginine decarboxylase (180 aa).

Serine 41 carries the pyruvic acid (Ser) modification.

It belongs to the PdaD family. The cofactor is pyruvate.

The catalysed reaction is L-arginine + H(+) = agmatine + CO2. The sequence is that of Pyruvoyl-dependent arginine decarboxylase from Methanococcoides burtonii (strain DSM 6242 / NBRC 107633 / OCM 468 / ACE-M).